A 2194-amino-acid polypeptide reads, in one-letter code: Genome polyprotein (2194 aa).

Gly-2 is lipidated: N-myristoyl glycine; by host. Over 2–1504 the chain is Cytoplasmic; sequence GAQVSTQKTG…HVSRAFICLQ (1503 aa). Residues 566 to 582 are amphipathic alpha-helix; sequence LYQNDPEGALNKAVGRV. Catalysis depends on for protease 2A activity residues His-881 and Asp-899. Residues Cys-916 and Cys-918 each coordinate Zn(2+). Cys-970 acts as the For protease 2A activity in catalysis. The Zn(2+) site is built by Cys-976 and His-978. The interval 1110–1182 is membrane-binding; sequence NNNWLKKFTE…EQSAPSQSDQ (73 aa). The segment at 1110–1248 is oligomerization; sequence NNNWLKKFTE…SPGAGKSVAT (139 aa). Residues 1131 to 1135 are RNA-binding; it reads AIKIQ. The SF3 helicase domain occupies 1214-1370; that stretch reads EKKMSNYIQF…SMYSQNGKIN (157 aa). Residues Cys-1378, Cys-1390, and Cys-1395 each coordinate Zn(2+). The segment at 1378 to 1395 adopts a C4-type; degenerate zinc-finger fold; the sequence is CDEECCPVNFKRCCPLVC. Residues 1422-1429 form an RNA-binding region; that stretch reads EYNHRHSV. Residues 1433–1438 are oligomerization; the sequence is LEALFQ. The stretch at 1505 to 1520 is an intramembrane region; sequence ALTTFVSVAGIIYIIY. At 1521 to 2194 the chain is on the cytoplasmic side; that stretch reads KLFAGFQGAY…TLRRKWLDSF (674 aa). Tyr-1530 is subject to O-(5'-phospho-RNA)-tyrosine. In terms of domain architecture, Peptidase C3 spans 1550–1728; the sequence is GPAFEFAVAM…FSAALLRHYF (179 aa). Active-site for protease 3C activity residues include His-1589, Glu-1620, and Cys-1696. Residues 1959–2075 form the RdRp catalytic domain; the sequence is GHLIAFDYSG…SYPHPIDASL (117 aa). Residues Asp-1965 and Asp-2061 each coordinate Mg(2+).

This sequence belongs to the picornaviruses polyprotein family. In terms of assembly, interacts with capsid protein VP1 and capsid protein VP3 to form heterotrimeric protomers. As to quaternary structure, interacts with capsid protein VP0, and capsid protein VP3 to form heterotrimeric protomers. Five protomers subsequently associate to form pentamers which serve as building blocks for the capsid. Interacts with capsid protein VP2, capsid protein VP3 and capsid protein VP4 following cleavage of capsid protein VP0. Interacts with capsid protein VP1 and capsid protein VP3 in the mature capsid. In terms of assembly, interacts with capsid protein VP0 and capsid protein VP1 to form heterotrimeric protomers. Five protomers subsequently associate to form pentamers which serve as building blocks for the capsid. Interacts with capsid protein VP4 in the mature capsid. Interacts with protein 2C; this interaction may be important for virion morphogenesis. As to quaternary structure, interacts with capsid protein VP1 and capsid protein VP3. Homodimer. In terms of assembly, homohexamer; forms a hexameric ring structure with 6-fold symmetry characteristic of AAA+ ATPases. Interacts (via N-terminus) with host RTN3 (via reticulon domain); this interaction is important for viral replication. Interacts with capsid protein VP3; this interaction may be important for virion morphogenesis. As to quaternary structure, interacts with protein 3CD. Homodimer. Interacts with host GBF1. Interacts (via GOLD domain) with host ACBD3 (via GOLD domain); this interaction allows the formation of a viral protein 3A/ACBD3 heterotetramer with a 2:2 stoichiometry, which will stimulate the recruitment of host PI4KB in order to synthesize PI4P at the viral RNA replication sites. In terms of assembly, interacts with RNA-directed RNA polymerase. As to quaternary structure, interacts with protein 3AB and with RNA-directed RNA polymerase. Interacts with Viral protein genome-linked and with protein 3CD. Mg(2+) is required as a cofactor. Specific enzymatic cleavages in vivo by the viral proteases yield processing intermediates and the mature proteins. In terms of processing, myristoylation is required for the formation of pentamers during virus assembly. Further assembly of 12 pentamers and a molecule of genomic RNA generates the provirion. Post-translationally, during virion maturation, immature virions are rendered infectious following cleavage of VP0 into VP4 and VP2. This maturation seems to be an autocatalytic event triggered by the presence of RNA in the capsid and it is followed by a conformational change infectious virion. Myristoylation is required during RNA encapsidation and formation of the mature virus particle. In terms of processing, VPg is uridylylated by the polymerase into VPg-pUpU. This acts as a nucleotide-peptide primer for the genomic RNA replication.

Its subcellular location is the virion. The protein localises to the host cytoplasm. It is found in the host cytoplasmic vesicle membrane. It localises to the host nucleus. The catalysed reaction is a ribonucleoside 5'-triphosphate + H2O = a ribonucleoside 5'-diphosphate + phosphate + H(+). It catalyses the reaction Selective cleavage of Tyr-|-Gly bond in the picornavirus polyprotein.. It carries out the reaction RNA(n) + a ribonucleoside 5'-triphosphate = RNA(n+1) + diphosphate. The enzyme catalyses Selective cleavage of Gln-|-Gly bond in the poliovirus polyprotein. In other picornavirus reactions Glu may be substituted for Gln, and Ser or Thr for Gly.. With respect to regulation, replication or transcription is subject to high level of random mutations by the nucleotide analog ribavirin. Forms an icosahedral capsid of pseudo T=3 symmetry with capsid proteins VP2 and VP3. The capsid is 300 Angstroms in diameter, composed of 60 copies of each capsid protein and enclosing the viral positive strand RNA genome. Capsid protein VP1 mainly forms the vertices of the capsid. Capsid protein VP1 interacts with host cell receptor to provide virion attachment to target host cells. This attachment induces virion internalization. Tyrosine kinases are probably involved in the entry process. After binding to its receptor, the capsid undergoes conformational changes. Capsid protein VP1 N-terminus (that contains an amphipathic alpha-helix) and capsid protein VP4 are externalized. Together, they shape a pore in the host membrane through which viral genome is translocated to host cell cytoplasm. Functionally, forms an icosahedral capsid of pseudo T=3 symmetry with capsid proteins VP2 and VP3. The capsid is 300 Angstroms in diameter, composed of 60 copies of each capsid protein and enclosing the viral positive strand RNA genome. In terms of biological role, lies on the inner surface of the capsid shell. After binding to the host receptor, the capsid undergoes conformational changes. Capsid protein VP4 is released, Capsid protein VP1 N-terminus is externalized, and together, they shape a pore in the host membrane through which the viral genome is translocated into the host cell cytoplasm. Its function is as follows. Component of immature procapsids, which is cleaved into capsid proteins VP4 and VP2 after maturation. Allows the capsid to remain inactive before the maturation step. Cysteine protease that cleaves viral polyprotein and specific host proteins. It is responsible for the autocatalytic cleavage between the P1 and P2 regions, which is the first cleavage occurring in the polyprotein. Also cleaves the host translation initiation factor EIF4G1, in order to shut down the capped cellular mRNA translation. Inhibits the host nucleus-cytoplasm protein and RNA trafficking by cleaving host members of the nuclear pores. Counteracts stress granule formation probably by antagonizing its assembly or promoting its dissassembly. Functionally, plays an essential role in the virus replication cycle by acting as a viroporin. Creates a pore in the host endoplasmic reticulum and as a consequence releases Ca2+ in the cytoplasm of infected cell. In turn, high levels of cytoplasmic calcium may trigger membrane trafficking and transport of viral ER-associated proteins to viroplasms, sites of viral genome replication. In terms of biological role, induces and associates with structural rearrangements of intracellular membranes. Displays RNA-binding, nucleotide binding and NTPase activities. May play a role in virion morphogenesis and viral RNA encapsidation by interacting with the capsid protein VP3. Its function is as follows. Localizes the viral replication complex to the surface of membranous vesicles. Together with protein 3CD binds the Cis-Active RNA Element (CRE) which is involved in RNA synthesis initiation. Acts as a cofactor to stimulate the activity of 3D polymerase, maybe through a nucleid acid chaperone activity. Localizes the viral replication complex to the surface of membranous vesicles. It inhibits host cell endoplasmic reticulum-to-Golgi apparatus transport and causes the disassembly of the Golgi complex, possibly through GBF1 interaction. This would result in depletion of MHC, trail receptors and IFN receptors at the host cell surface. Plays an essential role in viral RNA replication by recruiting ACBD3 and PI4KB at the viral replication sites, thereby allowing the formation of the rearranged membranous structures where viral replication takes place. Functionally, acts as a primer for viral RNA replication and remains covalently bound to viral genomic RNA. VPg is uridylylated prior to priming replication into VPg-pUpU. The oriI viral genomic sequence may act as a template for this. The VPg-pUpU is then used as primer on the genomic RNA poly(A) by the RNA-dependent RNA polymerase to replicate the viral genome. During genome replication, the VPg-RNA linkage is removed by the host TDP2, thereby accelerating replication. During the late stage of the replication cycle, host TDP2 is excluded from sites of viral RNA synthesis and encapsidation, allowing for the generation of progeny virions. In terms of biological role, involved in the viral replication complex and viral polypeptide maturation. It exhibits protease activity with a specificity and catalytic efficiency that is different from protease 3C. Protein 3CD lacks polymerase activity. Protein 3CD binds to the 5'UTR of the viral genome. Its function is as follows. Replicates the viral genomic RNA on the surface of intracellular membranes. May form linear arrays of subunits that propagate along a strong head-to-tail interaction called interface-I. Covalently attaches UMP to a tyrosine of VPg, which is used to prime RNA synthesis. The positive stranded RNA genome is first replicated at virus induced membranous vesicles, creating a dsRNA genomic replication form. This dsRNA is then used as template to synthesize positive stranded RNA genomes. ss(+)RNA genomes are either translated, replicated or encapsidated. Major viral protease that mediates proteolytic processing of the polyprotein. Cleaves host EIF5B, contributing to host translation shutoff. Also cleaves host PABPC1, contributing to host translation shutoff. Cleaves host NLRP1, triggers host N-glycine-mediated degradation of the autoinhibitory NLRP1 N-terminal fragment. In Homo sapiens (Human), this protein is Genome polyprotein.